The chain runs to 517 residues: Facilitated trehalose transporter Tret1 (517 aa).

The Cytoplasmic segment spans residues 1–56 (MWIEIPECYEVLRNVFSKFRRHSLTAAMVKLLMRADTHVSFTVPAEEPVAKCTFSQ). Residues 57 to 77 (VLAALSVSLGSMVVGFSSAYT) traverse the membrane as a helical segment. Topologically, residues 78-100 (SPALVSMKDRNITSFEVTDQSGS) are extracellular. N-linked (GlcNAc...) asparagine glycosylation is present at N88. Residues 101–121 (WVGGIMPLAGLVGGILGGPLI) traverse the membrane as a helical segment. Over 122–135 (EYLGRKNTILATAT) the chain is Cytoplasmic. Residues 136 to 156 (PFIISWLLIACATHVAMVLVG) traverse the membrane as a helical segment. Over 157–158 (RA) the chain is Extracellular. Residues 159-179 (LSGFSVGVASLSLPVYLGETV) form a helical membrane-spanning segment. At 180–184 (QPEVR) the chain is on the cytoplasmic side. A helical transmembrane segment spans residues 185–205 (GTLGLLPTAFGNIGILLCFVA). At 206 to 212 (GNYMDWS) the chain is on the extracellular side. Residues 213-233 (ELAFLGATLPVPFLILMFLIP) traverse the membrane as a helical segment. Topologically, residues 234–296 (ETPRWYVSRG…DLLKKTNLKP (63 aa)) are cytoplasmic. A helical membrane pass occupies residues 297–317 (LLISLGLMFFQQLSGINAVIF). Residues 318 to 333 (YTVQIFQDAGSTIDEN) are Extracellular-facing. The chain crosses the membrane as a helical span at residues 334-354 (LCTIIVGVVNFIATFIATLLI). Residues 355–360 (DRLGRK) are Cytoplasmic-facing. Residues 361–381 (MLLYISDIAMIITLMTLGGFF) traverse the membrane as a helical segment. Residues 382–392 (YVKNNGGDVSH) are Extracellular-facing. A helical transmembrane segment spans residues 393–413 (IGWLPLASFVIFVLGFSLGFG). Residues 414-437 (PIPWLMMGEILPGKIRGSAASVAT) lie on the Cytoplasmic side of the membrane. A helical transmembrane segment spans residues 438–458 (AFNWSCTFVVTKTFADIIASI). Over 459–461 (GTH) the chain is Extracellular. Residues 462 to 482 (GAFWMFGSVCVVGLVFVIMYV) traverse the membrane as a helical segment. The Cytoplasmic segment spans residues 483 to 517 (PETQGKSLEDIERKMCGRVRRMSSVANIKPLSFNM).

This sequence belongs to the major facilitator superfamily. Sugar transporter (TC 2.A.1.1) family. Trehalose transporter subfamily.

It localises to the cell membrane. High-capacity facilitative transporter for trehalose. Does not transport maltose, sucrose or lactose. Mediates the bidirectional transfer of trehalose. Responsible for the transport of trehalose synthesized in the fat body and the incorporation of trehalose into other tissues that require a carbon source, thereby regulating trehalose levels in the hemolymph. In Culex quinquefasciatus (Southern house mosquito), this protein is Facilitated trehalose transporter Tret1.